A 90-amino-acid chain; its full sequence is Co-chaperonin GroES (90 aa).

This sequence belongs to the GroES chaperonin family. As to quaternary structure, heptamer of 7 subunits arranged in a ring. Interacts with the chaperonin GroEL.

It localises to the cytoplasm. Its function is as follows. Together with the chaperonin GroEL, plays an essential role in assisting protein folding. The GroEL-GroES system forms a nano-cage that allows encapsulation of the non-native substrate proteins and provides a physical environment optimized to promote and accelerate protein folding. GroES binds to the apical surface of the GroEL ring, thereby capping the opening of the GroEL channel. This Bacteroides fragilis (strain ATCC 25285 / DSM 2151 / CCUG 4856 / JCM 11019 / LMG 10263 / NCTC 9343 / Onslow / VPI 2553 / EN-2) protein is Co-chaperonin GroES.